Here is a 702-residue protein sequence, read N- to C-terminus: Elongation factor G (702 aa).

The 284-residue stretch at 9–292 folds into the tr-type G domain; the sequence is DRTRNIGIMA…AVVDYLPSPL (284 aa). Residues 18–25, 91–95, and 145–148 each bind GTP; these read AHIDAGKT, DTPGH, and NKMD.

Belongs to the TRAFAC class translation factor GTPase superfamily. Classic translation factor GTPase family. EF-G/EF-2 subfamily.

Its subcellular location is the cytoplasm. Its function is as follows. Catalyzes the GTP-dependent ribosomal translocation step during translation elongation. During this step, the ribosome changes from the pre-translocational (PRE) to the post-translocational (POST) state as the newly formed A-site-bound peptidyl-tRNA and P-site-bound deacylated tRNA move to the P and E sites, respectively. Catalyzes the coordinated movement of the two tRNA molecules, the mRNA and conformational changes in the ribosome. The polypeptide is Elongation factor G (Oenococcus oeni (strain ATCC BAA-331 / PSU-1)).